Here is a 399-residue protein sequence, read N- to C-terminus: tRNA-dihydrouridine(16/17) synthase [NAD(P)(+)] (399 aa).

FMN is bound by residues 24–26 (PMV) and glutamine 80. Cysteine 109 (proton donor) is an active-site residue. FMN contacts are provided by residues lysine 148, histidine 176, 211–213 (NGN), and 235–236 (AE).

Belongs to the Dus family. Dus1 subfamily. Requires FMN as cofactor.

It localises to the nucleus. The protein localises to the mitochondrion. It carries out the reaction 5,6-dihydrouridine(16) in tRNA + NADP(+) = uridine(16) in tRNA + NADPH + H(+). The catalysed reaction is 5,6-dihydrouridine(16) in tRNA + NAD(+) = uridine(16) in tRNA + NADH + H(+). It catalyses the reaction 5,6-dihydrouridine(17) in tRNA + NAD(+) = uridine(17) in tRNA + NADH + H(+). The enzyme catalyses 5,6-dihydrouridine(17) in tRNA + NADP(+) = uridine(17) in tRNA + NADPH + H(+). It carries out the reaction a 5,6-dihydrouridine in mRNA + NAD(+) = a uridine in mRNA + NADH + H(+). The catalysed reaction is a 5,6-dihydrouridine in mRNA + NADP(+) = a uridine in mRNA + NADPH + H(+). In terms of biological role, catalyzes the synthesis of dihydrouridine, a modified base found in the D-loop of most tRNAs. Also able to mediate dihydrouridylation of some mRNAs, thereby affecting their translation. The sequence is that of tRNA-dihydrouridine(16/17) synthase [NAD(P)(+)] from Schizosaccharomyces pombe (strain 972 / ATCC 24843) (Fission yeast).